A 601-amino-acid polypeptide reads, in one-letter code: DNA topoisomerase I, mitochondrial (601 aa).

The transit peptide at 1–50 directs the protein to the mitochondrion; sequence MRVVRLLRLRAALTLLGEVPRRPASRGVPGSRRTQKGSGARWEKEKHEDG. The segment at 22–48 is disordered; that stretch reads RPASRGVPGSRRTQKGSGARWEKEKHE. Interaction with DNA regions lie at residues 261–262, 324–329, and 421–423; these read KY, RAGNEK, and TAK. The Topo IB-type catalytic domain occupies 268 to 601; that stretch reads CSKLKGETAW…LAMAGEDFEF (334 aa). Residue Tyr-559 is the O-(3'-phospho-DNA)-tyrosine intermediate of the active site.

It belongs to the type IB topoisomerase family. Ca(2+) serves as cofactor. Mg(2+) is required as a cofactor. In terms of tissue distribution, ubiquitous; highest in skeletal muscle, heart, brain and fetal liver.

Its subcellular location is the mitochondrion. It catalyses the reaction ATP-independent breakage of single-stranded DNA, followed by passage and rejoining.. Releases the supercoiling and torsional tension of DNA introduced during duplication of mitochondrial DNA by transiently cleaving and rejoining one strand of the DNA duplex. Introduces a single-strand break via transesterification at a target site in duplex DNA. The scissile phosphodiester is attacked by the catalytic tyrosine of the enzyme, resulting in the formation of a DNA-(3'-phosphotyrosyl)-enzyme intermediate and the expulsion of a 5'-OH DNA strand. The free DNA strand then rotates around the intact phosphodiester bond on the opposing strand, thus removing DNA supercoils. Finally, in the religation step, the DNA 5'-OH attacks the covalent intermediate to expel the active-site tyrosine and restore the DNA phosphodiester backbone. The protein is DNA topoisomerase I, mitochondrial (TOP1MT) of Homo sapiens (Human).